A 449-amino-acid chain; its full sequence is uncharacterized protein (449 aa).

Its subcellular location is the mitochondrion. This is an uncharacterized protein from Podospora anserina (strain S / ATCC MYA-4624 / DSM 980 / FGSC 10383) (Pleurage anserina).